A 280-amino-acid polypeptide reads, in one-letter code: 4-diphosphocytidyl-2-C-methyl-D-erythritol kinase (280 aa).

Lys-8 is a catalytic residue. Residue 91-101 coordinates ATP; it reads PVAAGLAGGST. Asp-133 is an active-site residue.

This sequence belongs to the GHMP kinase family. IspE subfamily.

The catalysed reaction is 4-CDP-2-C-methyl-D-erythritol + ATP = 4-CDP-2-C-methyl-D-erythritol 2-phosphate + ADP + H(+). The protein operates within isoprenoid biosynthesis; isopentenyl diphosphate biosynthesis via DXP pathway; isopentenyl diphosphate from 1-deoxy-D-xylulose 5-phosphate: step 3/6. Its function is as follows. Catalyzes the phosphorylation of the position 2 hydroxy group of 4-diphosphocytidyl-2C-methyl-D-erythritol. The chain is 4-diphosphocytidyl-2-C-methyl-D-erythritol kinase from Clostridium botulinum (strain ATCC 19397 / Type A).